The primary structure comprises 97 residues: Large ribosomal subunit protein uL23 (97 aa).

The protein belongs to the universal ribosomal protein uL23 family. Part of the 50S ribosomal subunit. Contacts protein L29, and trigger factor when it is bound to the ribosome.

Functionally, one of the early assembly proteins it binds 23S rRNA. One of the proteins that surrounds the polypeptide exit tunnel on the outside of the ribosome. Forms the main docking site for trigger factor binding to the ribosome. The sequence is that of Large ribosomal subunit protein uL23 from Brucella abortus (strain S19).